Consider the following 519-residue polypeptide: Cysteine--tRNA ligase (519 aa).

Cys30 contributes to the Zn(2+) binding site. The 'HIGH' region signature appears at 32 to 42 (PTVYDRAHLGN). Positions 221, 253, and 257 each coordinate Zn(2+). The 'KMSKS' region signature appears at 286–290 (KMSKS). Lys289 contacts ATP.

Belongs to the class-I aminoacyl-tRNA synthetase family. As to quaternary structure, monomer. Requires Zn(2+) as cofactor.

It is found in the cytoplasm. The enzyme catalyses tRNA(Cys) + L-cysteine + ATP = L-cysteinyl-tRNA(Cys) + AMP + diphosphate. In Cereibacter sphaeroides (strain KD131 / KCTC 12085) (Rhodobacter sphaeroides), this protein is Cysteine--tRNA ligase.